The chain runs to 90 residues: Large ribosomal subunit protein bL31B-1 (90 aa).

It belongs to the bacterial ribosomal protein bL31 family. Type B subfamily. In terms of assembly, part of the 50S ribosomal subunit.

In Streptomyces coelicolor (strain ATCC BAA-471 / A3(2) / M145), this protein is Large ribosomal subunit protein bL31B-1.